The primary structure comprises 101 residues: Phosphoprotein OPG062 (101 aa).

A disordered region spans residues 51-73 (PSSPACERRPSSPSRCERMNNPG). 2 positions are modified to phosphoserine: serine 53 and serine 62. Over residues 56 to 68 (CERRPSSPSRCER) the composition is skewed to basic and acidic residues.

It belongs to the orthopoxvirus OPG062 family. In terms of assembly, self-associates to form high molecular-weight forms. Interacts with protein OPG157. Interacts with host RICTOR and RPTOR; these interactions disrupt the mTORC1 and mTORC2 crosstalk. In terms of processing, phosphorylated on two serines. While these phosphorylations do not play a role in virion assembly; they are essential for the interaction with host RICTOR and RPTOR.

The protein localises to the virion. Plays an essential role in virion assembly and morphogenesis. Also plays a role in the inhibition of host immune response by dysregulating mTOR. Sequesters host RICTOR and RPTOR, thereby disrupting mTORC1 and mTORC2 crosstalk. In turn, blocks the host antiviral response in part through mTOR-dependent degradation of cGAS, the primary poxvirus sensor. In Homo sapiens (Human), this protein is Phosphoprotein OPG062 (OPG062).